The sequence spans 155 residues: DNA gyrase inhibitor (155 aa).

Belongs to the DNA gyrase inhibitor family. Interacts with DNA gyrase.

It is found in the cytoplasm. In terms of biological role, inhibits the supercoiling activity of DNA gyrase. Acts by inhibiting DNA gyrase at an early step, prior to (or at the step of) binding of DNA by the gyrase. It protects cells against toxins that target DNA gyrase, by inhibiting activity of these toxins and reducing the formation of lethal double-strand breaks in the cell. In Escherichia fergusonii (strain ATCC 35469 / DSM 13698 / CCUG 18766 / IAM 14443 / JCM 21226 / LMG 7866 / NBRC 102419 / NCTC 12128 / CDC 0568-73), this protein is DNA gyrase inhibitor.